A 1320-amino-acid chain; its full sequence is Sister chromatid cohesion protein PDS5 homolog A (1320 aa).

HEAT repeat units lie at residues 156 to 195 (NEIFIQLFKTLFSVINNSHNQKVQMHMLDLMSSIIMEGDG), 272 to 310 (PLLLVSVMPQLEFKLKSNDGEERLAVVKLLAKLFGAKDS), 388 to 426 (NLVNDQLLGFVRERMLDKRWRVRKEAMMGLAQLFKKYCL), 709 to 747 (PQIRSTLIPILHQKAKRGTPHQAKQAVHCIHAIFHNKEV), and 990 to 1028 (SLLPEYVVPYMIHLLAHDPDLTKPQDLEQLRDVKECLWF). Positions 1158–1179 (TFTSETGSNASTNSQPSSPATN) are enriched in polar residues. The interval 1158 to 1320 (TFTSETGSNA…APQRQIDLQR (163 aa)) is disordered. Over residues 1180–1194 (KSRDVSSEVGARENE) the composition is skewed to basic and acidic residues. The span at 1225 to 1241 (GTENSVSSNPSAGSQPP) shows a compositional bias: polar residues. Low complexity predominate over residues 1255 to 1267 (AGAATQEKEAGAT). Residues 1283 to 1293 (QDPSSTASTDA) show a composition bias toward polar residues. A compositionally biased stretch (basic and acidic residues) spans 1294–1309 (LSDKTPKQQKEAEPKR).

This sequence belongs to the PDS5 family. In terms of assembly, interacts with the cohesin complex. Binds chromatin in a cohesin-dependent manner.

It localises to the nucleus. Its function is as follows. May regulate sister chromatid cohesion during mitosis and couple it to DNA replication. The sequence is that of Sister chromatid cohesion protein PDS5 homolog A from Danio rerio (Zebrafish).